Consider the following 369-residue polypeptide: Methionine import ATP-binding protein MetN 1 (369 aa).

The interval 1-26 is disordered; it reads MTTMTVPPSLLPLEPFPTAPDTRAST. Residues 29–265 enclose the ABC transporter domain; sequence IRLHGLGKRY…PRHAVTRSLL (237 aa). 62 to 69 lines the ATP pocket; it reads GRSGAGKS.

Belongs to the ABC transporter superfamily. Methionine importer (TC 3.A.1.24) family. As to quaternary structure, the complex is composed of two ATP-binding proteins (MetN), two transmembrane proteins (MetI) and a solute-binding protein (MetQ).

It is found in the cell inner membrane. It catalyses the reaction L-methionine(out) + ATP + H2O = L-methionine(in) + ADP + phosphate + H(+). The enzyme catalyses D-methionine(out) + ATP + H2O = D-methionine(in) + ADP + phosphate + H(+). Part of the ABC transporter complex MetNIQ involved in methionine import. Responsible for energy coupling to the transport system. The polypeptide is Methionine import ATP-binding protein MetN 1 (Pseudomonas aeruginosa (strain UCBPP-PA14)).